Reading from the N-terminus, the 435-residue chain is MSNSEFKSLGCSKWLVEALNAMKIVQPTAIQKACIPEILKGRDCIGGANTGSGKTIAFAAPMLTKWSEDPQGMFGIVLTPTRELAMQIAEQFTAFGSAMNIRVAIVVGGESIVQQAIELQKRPHFIIATPGRLAHHVLNSGEDTIGGLKRVKFLVLDEADILLTETFSKDLATCVSILPPKNKRQNLLFTATMTDQVKALSDAPQTEGKPPVFTFEVESVDNVAIPKTLETTYLLVPEHVKESYLYQILTSEKYVKSSCIIFVNRTVTAEILRRTLKSLDVRVTSLHSQMPQQERTNSVQRFRAQAARVLIATDVASRGLDIPIVELVVNYDIPGNPDTFIHRAGRTARAGRHGESLCFVTEKDIQRVEAIEERINKKMEEFTDVGDTAVIRKSLTKVTAAKRESLMAMDKEGFGERRKLQKRKNESKEKTHRRT.

The Q motif signature appears at 4 to 32 (SEFKSLGCSKWLVEALNAMKIVQPTAIQK). A Helicase ATP-binding domain is found at 35–211 (IPEILKGRDC…DAPQTEGKPP (177 aa)). 48-55 (ANTGSGKT) lines the ATP pocket. The DEAD box signature appears at 157 to 160 (DEAD). Residues 244-391 (YLYQILTSEK…FTDVGDTAVI (148 aa)) form the Helicase C-terminal domain. Residues 409-429 (MDKEGFGERRKLQKRKNESKE) show a composition bias toward basic and acidic residues. Positions 409–435 (MDKEGFGERRKLQKRKNESKEKTHRRT) are disordered.

Belongs to the DEAD box helicase family. DDX49/DBP8 subfamily.

The protein localises to the nucleus. The protein resides in the nucleolus. The catalysed reaction is ATP + H2O = ADP + phosphate + H(+). ATP-binding RNA helicase involved in 40S ribosomal subunit biogenesis and is required for the normal formation of 18S rRNAs through pre-rRNA processing at A0, A1 and A2 sites. Required for vegetative growth. In Kluyveromyces lactis (strain ATCC 8585 / CBS 2359 / DSM 70799 / NBRC 1267 / NRRL Y-1140 / WM37) (Yeast), this protein is ATP-dependent RNA helicase DBP8 (DBP8).